A 189-amino-acid chain; its full sequence is Elongation factor P (189 aa).

The protein belongs to the elongation factor P family.

The protein resides in the cytoplasm. The protein operates within protein biosynthesis; polypeptide chain elongation. Functionally, involved in peptide bond synthesis. Stimulates efficient translation and peptide-bond synthesis on native or reconstituted 70S ribosomes in vitro. Probably functions indirectly by altering the affinity of the ribosome for aminoacyl-tRNA, thus increasing their reactivity as acceptors for peptidyl transferase. The protein is Elongation factor P of Rhizobium rhizogenes (strain K84 / ATCC BAA-868) (Agrobacterium radiobacter).